The chain runs to 393 residues: MDTFLFTSESVNEGHPDKLCDQISDAILDACLEQDPESKVACETCTKTNMVMIFGEITTKANIDYEKIVRDTCRGIGFVSADVGLDADNCKVLVNIEQQSPDIAQGVHGHLTKKPEEIGAGDQGHMFGYATDETPELMPLTHVLATKLGARLTEVRKDGTCPWLRPDGKTQVTVEYKNEGGAMVPLRVHTVLISTQHDETVTNDEIAADLKEHVIKPVVPSQYLDENTIFHLNPSGRFVIGGPHGDAGLTGRKIIIDTYGGWGAHGGGAFSGKDPTKVDRSGAYIVRQAAKSVVAAGLARRCLVQVSYAIGVPEPLSVFVDTYGTGTGKIQDAEILKLIKENFDFRPGMISINLDLKRGGNMRFQKTAAYGHFGREDPDFTWETVKVLKWEKA.

Glutamate 9 provides a ligand contact to Mg(2+). Histidine 15 serves as a coordination point for ATP. A K(+)-binding site is contributed by glutamate 43. L-methionine-binding residues include glutamate 56 and glutamine 99. Residues 167–169 (DGK), 235–238 (SGRF), aspartate 246, 252–253 (RK), alanine 269, lysine 273, and lysine 277 contribute to the ATP site. Residue aspartate 246 participates in L-methionine binding. L-methionine is bound at residue lysine 277.

This sequence belongs to the AdoMet synthase family. Homotetramer. It depends on Mn(2+) as a cofactor. Mg(2+) is required as a cofactor. Co(2+) serves as cofactor. The cofactor is K(+).

Its subcellular location is the cytoplasm. It carries out the reaction L-methionine + ATP + H2O = S-adenosyl-L-methionine + phosphate + diphosphate. It participates in amino-acid biosynthesis; S-adenosyl-L-methionine biosynthesis; S-adenosyl-L-methionine from L-methionine: step 1/1. Catalyzes the formation of S-adenosylmethionine from methionine and ATP. The reaction comprises two steps that are both catalyzed by the same enzyme: formation of S-adenosylmethionine (AdoMet) and triphosphate, and subsequent hydrolysis of the triphosphate. This is S-adenosylmethionine synthase 1 (METK1) from Picea sitchensis (Sitka spruce).